The chain runs to 270 residues: Putative pyruvate, phosphate dikinase regulatory protein (270 aa).

151-158 (GVSRTSKT) provides a ligand contact to ADP.

The protein belongs to the pyruvate, phosphate/water dikinase regulatory protein family. PDRP subfamily.

The catalysed reaction is N(tele)-phospho-L-histidyl/L-threonyl-[pyruvate, phosphate dikinase] + ADP = N(tele)-phospho-L-histidyl/O-phospho-L-threonyl-[pyruvate, phosphate dikinase] + AMP + H(+). It carries out the reaction N(tele)-phospho-L-histidyl/O-phospho-L-threonyl-[pyruvate, phosphate dikinase] + phosphate + H(+) = N(tele)-phospho-L-histidyl/L-threonyl-[pyruvate, phosphate dikinase] + diphosphate. Functionally, bifunctional serine/threonine kinase and phosphorylase involved in the regulation of the pyruvate, phosphate dikinase (PPDK) by catalyzing its phosphorylation/dephosphorylation. The sequence is that of Putative pyruvate, phosphate dikinase regulatory protein from Bacillus velezensis (strain DSM 23117 / BGSC 10A6 / LMG 26770 / FZB42) (Bacillus amyloliquefaciens subsp. plantarum).